The sequence spans 187 residues: Probable DNA endonuclease SmrA (187 aa).

One can recognise a Smr domain in the interval 88–169; that stretch reads LNLLRQPVEE…GSGACYVALR (82 aa).

Its function is as follows. Has DNA endonuclease activity. Binds DNA. The protein is Probable DNA endonuclease SmrA (smrA) of Escherichia coli (strain K12).